Reading from the N-terminus, the 332-residue chain is 4-hydroxyproline 2-epimerase 2 (332 aa).

Cysteine 89 serves as the catalytic Proton acceptor. Residues histidine 222, aspartate 248, and 253-254 (GT) contribute to the substrate site.

The protein belongs to the proline racemase family.

It catalyses the reaction trans-4-hydroxy-L-proline = cis-4-hydroxy-D-proline. Catalyzes the epimerization of trans-4-hydroxy-L-proline (t4LHyp) to cis-4-hydroxy-D-proline (c4DHyp). Is likely involved in a degradation pathway that converts t4LHyp to alpha-ketoglutarate. Displays no proline racemase activity. This is 4-hydroxyproline 2-epimerase 2 from Rhizobium rhizogenes (strain K84 / ATCC BAA-868) (Agrobacterium radiobacter).